Reading from the N-terminus, the 474-residue chain is Glutamate--tRNA ligase (474 aa).

The 'HIGH' region signature appears at 11–21 (PSPTGFLHIGG). A 'KMSKS' region motif is present at residues 240 to 244 (KLSKR). Position 243 (K243) interacts with ATP.

Belongs to the class-I aminoacyl-tRNA synthetase family. Glutamate--tRNA ligase type 1 subfamily. Monomer.

The protein localises to the cytoplasm. The catalysed reaction is tRNA(Glu) + L-glutamate + ATP = L-glutamyl-tRNA(Glu) + AMP + diphosphate. Catalyzes the attachment of glutamate to tRNA(Glu) in a two-step reaction: glutamate is first activated by ATP to form Glu-AMP and then transferred to the acceptor end of tRNA(Glu). This Nitrobacter winogradskyi (strain ATCC 25391 / DSM 10237 / CIP 104748 / NCIMB 11846 / Nb-255) protein is Glutamate--tRNA ligase.